The sequence spans 412 residues: MAAALLARAGGSLGRALRARDWRRLHTVYQSVELPETHQMLRQTCRDFAEKELVPIAAQLDKEHLFPTSQVKKMGELGLLAMDVPEELSGAGLDYLAYSIALEEISRGCASTGVIMSVNNSLYLGPILKFGSSQQKQQWITPFTNGDKIGCFALSEPGNGSDAGAASTTAREEGDSWVLNGTKAWITNSWEASATVVFASTDRSRQNKGISAFLVPMPTPGLTLGKKEDKLGIRASSTANLIFEDCRIPKENLLGEPGMGFKIAMQTLDMGRIGIASQALGIAQASLDCAVKYAENRHAFGAPLTKLQNIQFKLADMALALESARLLTWRAAMLKDNKKPFTKESAMAKLAASEAATAISHQAIQILGGMGYVTEMPAERYYRDARITEIYEGTSEIQRLVIAGHLLRSYRS.

The transit peptide at 1–24 directs the protein to the mitochondrion; that stretch reads MAAALLARAGGSLGRALRARDWRR. Position 27 is a phosphothreonine (T27). Residue K51 is modified to N6-acetyllysine; alternate. Residue K51 is modified to N6-succinyllysine; alternate. K72 carries the N6-acetyllysine modification. K129 bears the N6-acetyllysine; alternate mark. Residue K129 is modified to N6-succinyllysine; alternate. Residues 152 to 161 and 185 to 187 contribute to the FAD site; these read FALSEPGNGS and WIT. S161 lines the substrate pocket. K208 bears the N6-acetyllysine mark. N6-acetyllysine; alternate is present on K262. K262 bears the N6-succinyllysine; alternate mark. Residue 269-272 participates in substrate binding; sequence DMGR. The residue at position 292 (K292) is an N6-acetyllysine. R297 serves as a coordination point for FAD. Residue K306 is modified to N6-acetyllysine; alternate. K306 carries the N6-succinyllysine; alternate modification. 365–369 contributes to the FAD binding site; it reads QILGG. E392 serves as the catalytic Proton acceptor. 394-396 is an FAD binding site; the sequence is TSE.

This sequence belongs to the acyl-CoA dehydrogenase family. As to quaternary structure, homotetramer. FAD serves as cofactor.

The protein localises to the mitochondrion matrix. The catalysed reaction is a short-chain 2,3-saturated fatty acyl-CoA + oxidized [electron-transfer flavoprotein] + H(+) = a short-chain (2E)-enoyl-CoA + reduced [electron-transfer flavoprotein]. It catalyses the reaction butanoyl-CoA + oxidized [electron-transfer flavoprotein] + H(+) = (2E)-butenoyl-CoA + reduced [electron-transfer flavoprotein]. The enzyme catalyses pentanoyl-CoA + oxidized [electron-transfer flavoprotein] + H(+) = (2E)-pentenoyl-CoA + reduced [electron-transfer flavoprotein]. It carries out the reaction hexanoyl-CoA + oxidized [electron-transfer flavoprotein] + H(+) = (2E)-hexenoyl-CoA + reduced [electron-transfer flavoprotein]. It participates in lipid metabolism; mitochondrial fatty acid beta-oxidation. In terms of biological role, short-chain specific acyl-CoA dehydrogenase is one of the acyl-CoA dehydrogenases that catalyze the first step of mitochondrial fatty acid beta-oxidation, an aerobic process breaking down fatty acids into acetyl-CoA and allowing the production of energy from fats. The first step of fatty acid beta-oxidation consists in the removal of one hydrogen from C-2 and C-3 of the straight-chain fatty acyl-CoA thioester, resulting in the formation of trans-2-enoyl-CoA. Among the different mitochondrial acyl-CoA dehydrogenases, short-chain specific acyl-CoA dehydrogenase acts specifically on acyl-CoAs with saturated 4 to 6 carbons long primary chains. In Rattus norvegicus (Rat), this protein is Short-chain specific acyl-CoA dehydrogenase, mitochondrial (Acads).